Consider the following 790-residue polypeptide: Probable copper-transporting ATPase SynA (790 aa).

The Cytoplasmic segment spans residues 1-105 (MPAAIVHSAD…IPPLQQQRLQ (105 aa)). An HMA domain is found at 14 to 81 (TSILVEVEGM…EITGLGFRAQ (68 aa)). Positions 25 and 28 each coordinate Cu(+). Residues 106–127 (LAIAAFLLIVSSWGHLGHWLDH) traverse the membrane as a helical segment. Residues 128–136 (PLPGTDQLW) lie on the Extracellular side of the membrane. Residues 137–156 (FHALLATWALLGPGRSILQA) form a helical membrane-spanning segment. At 157 to 163 (GWQGLRC) the chain is on the cytoplasmic side. Residues 164 to 184 (GAPNMNSLVLLGTGSAYLASL) traverse the membrane as a helical segment. Residues 185–198 (VALLWPQLGWVCFF) lie on the Extracellular side of the membrane. Residues 199 to 219 (DEPVMLLGFILLGRTLEEQAR) form a helical membrane-spanning segment. Residues 220–358 (FRSQAALQNL…KAPVQRFADA (139 aa)) are Cytoplasmic-facing. Residues 359–381 (IAGRFVYGVCAIAALTFGFWATL) traverse the membrane as a helical segment. Residues 382-420 (GSRWWPQVLQQPLPGLLIHAPHHGMEMAHPHSHSPLLLA) are Extracellular-facing. The chain crosses the membrane as a helical span at residues 421–438 (LTLAISVLVVACPCALGL). Over 439–723 (ATPTAILVAT…NLSQMGLRTI (285 aa)) the chain is Cytoplasmic. Aspartate 476 acts as the 4-aspartylphosphate intermediate in catalysis. 2 residues coordinate Mg(2+): aspartate 669 and aspartate 673. The chain crosses the membrane as a helical span at residues 724–743 (RQNLTWALGYNVVMLPLAAG). Topologically, residues 744 to 755 (AFLPAYGLALTP) are extracellular. The helical transmembrane segment at 756–774 (AIAGACMAVSSLAVVSNSL) threads the bilayer. Residues 775–790 (LLRYWFRRSLNHSVSV) are Cytoplasmic-facing.

Belongs to the cation transport ATPase (P-type) (TC 3.A.3) family. Type IB subfamily.

Its subcellular location is the cell membrane. It carries out the reaction Cu(+)(in) + ATP + H2O = Cu(+)(out) + ADP + phosphate + H(+). Its function is as follows. Involved in copper transport. The sequence is that of Probable copper-transporting ATPase SynA (synA) from Synechococcus elongatus (strain ATCC 33912 / PCC 7942 / FACHB-805) (Anacystis nidulans R2).